The chain runs to 782 residues: ATP-dependent 6-phosphofructokinase, muscle type (782 aa).

At threonine 2 the chain carries N-acetylthreonine. Positions 2–390 (THEEHHAAKT…NWEVYKLLAH (389 aa)) are N-terminal catalytic PFK domain 1. ATP contacts are provided by residues glycine 25, 88–89 (RC), and 118–121 (GDGS). Aspartate 119 is a Mg(2+) binding site. Position 133 is a phosphoserine (serine 133). Substrate contacts are provided by residues 164–166 (SID), arginine 201, 208–210 (MGR), glutamate 264, arginine 292, and 298–301 (HVQR). Aspartate 166 serves as the catalytic Proton acceptor. Position 377 is a phosphoserine (serine 377). Residues 391-403 (IRPPVSKTSATMH) are interdomain linker. Positions 404–782 (TVAVMNVGAP…SRKRSGETSI (379 aa)) are C-terminal regulatory PFK domain 2. Beta-D-fructose 2,6-bisphosphate is bound by residues arginine 473 and 530–534 (TVSNN). The O-linked (GlcNAc) serine glycan is linked to serine 532. Position 559 is an N6-(2-hydroxyisobutyryl)lysine (lysine 559). Residues arginine 568, 575–577 (MGG), glutamate 631, arginine 657, and 663–666 (HMQQ) contribute to the beta-D-fructose 2,6-bisphosphate site. Residue serine 669 is modified to Phosphoserine. Position 737 (arginine 737) interacts with beta-D-fructose 2,6-bisphosphate. Position 777 is a phosphoserine (serine 777).

This sequence belongs to the phosphofructokinase type A (PFKA) family. ATP-dependent PFK group I subfamily. Eukaryotic two domain clade 'E' sub-subfamily. As to quaternary structure, homo- and heterotetramers. Phosphofructokinase (PFK) enzyme functions as a tetramer composed of different combinations of 3 types of subunits, called PFKM (M), PFKL (L) and PFKP (P). The composition of the PFK tetramer differs according to the tissue type it is present in. The kinetic and regulatory properties of the tetrameric enzyme are dependent on the subunit composition, hence can vary across tissues. Interacts (via C-terminus) with HK1 (via N-terminal spermatogenic cell-specific region). Mg(2+) is required as a cofactor. Post-translationally, glcNAcylation decreases enzyme activity.

Its subcellular location is the cytoplasm. It carries out the reaction beta-D-fructose 6-phosphate + ATP = beta-D-fructose 1,6-bisphosphate + ADP + H(+). It functions in the pathway carbohydrate degradation; glycolysis; D-glyceraldehyde 3-phosphate and glycerone phosphate from D-glucose: step 3/4. Its activity is regulated as follows. Allosterically activated by ADP, AMP, or fructose 2,6-bisphosphate, and allosterically inhibited by ATP or citrate. Functionally, catalyzes the phosphorylation of D-fructose 6-phosphate to fructose 1,6-bisphosphate by ATP, the first committing step of glycolysis. In Canis lupus familiaris (Dog), this protein is ATP-dependent 6-phosphofructokinase, muscle type (PFKM).